We begin with the raw amino-acid sequence, 230 residues long: Probable methylthioribulose-1-phosphate dehydratase (230 aa).

Cys-87 contributes to the substrate binding site. Zn(2+) is bound by residues His-105 and His-107. Catalysis depends on Glu-129, which acts as the Proton donor/acceptor. Residue His-185 participates in Zn(2+) binding.

The protein belongs to the aldolase class II family. MtnB subfamily. Requires Zn(2+) as cofactor.

It localises to the cytoplasm. The enzyme catalyses 5-(methylsulfanyl)-D-ribulose 1-phosphate = 5-methylsulfanyl-2,3-dioxopentyl phosphate + H2O. It participates in amino-acid biosynthesis; L-methionine biosynthesis via salvage pathway; L-methionine from S-methyl-5-thio-alpha-D-ribose 1-phosphate: step 2/6. Functionally, catalyzes the dehydration of methylthioribulose-1-phosphate (MTRu-1-P) into 2,3-diketo-5-methylthiopentyl-1-phosphate (DK-MTP-1-P). The sequence is that of Probable methylthioribulose-1-phosphate dehydratase from Drosophila virilis (Fruit fly).